A 161-amino-acid polypeptide reads, in one-letter code: ATP synthase subunit b (161 aa).

Residues 2-22 traverse the membrane as a helical segment; the sequence is VIEWGTALYQLLAFAVLLLIL.

Belongs to the ATPase B chain family. As to quaternary structure, F-type ATPases have 2 components, F(1) - the catalytic core - and F(0) - the membrane proton channel. F(1) has five subunits: alpha(3), beta(3), gamma(1), delta(1), epsilon(1). F(0) has three main subunits: a(1), b(2) and c(10-14). The alpha and beta chains form an alternating ring which encloses part of the gamma chain. F(1) is attached to F(0) by a central stalk formed by the gamma and epsilon chains, while a peripheral stalk is formed by the delta and b chains.

It is found in the cell membrane. F(1)F(0) ATP synthase produces ATP from ADP in the presence of a proton or sodium gradient. F-type ATPases consist of two structural domains, F(1) containing the extramembraneous catalytic core and F(0) containing the membrane proton channel, linked together by a central stalk and a peripheral stalk. During catalysis, ATP synthesis in the catalytic domain of F(1) is coupled via a rotary mechanism of the central stalk subunits to proton translocation. Functionally, component of the F(0) channel, it forms part of the peripheral stalk, linking F(1) to F(0). This Shouchella clausii (strain KSM-K16) (Alkalihalobacillus clausii) protein is ATP synthase subunit b.